Consider the following 498-residue polypeptide: ATP synthase subunit beta, chloroplastic (498 aa).

172 to 179 contacts ATP; the sequence is GGAGVGKT.

It belongs to the ATPase alpha/beta chains family. F-type ATPases have 2 components, CF(1) - the catalytic core - and CF(0) - the membrane proton channel. CF(1) has five subunits: alpha(3), beta(3), gamma(1), delta(1), epsilon(1). CF(0) has four main subunits: a(1), b(1), b'(1) and c(9-12).

The protein resides in the plastid. Its subcellular location is the chloroplast thylakoid membrane. It carries out the reaction ATP + H2O + 4 H(+)(in) = ADP + phosphate + 5 H(+)(out). In terms of biological role, produces ATP from ADP in the presence of a proton gradient across the membrane. The catalytic sites are hosted primarily by the beta subunits. The protein is ATP synthase subunit beta, chloroplastic of Aristolochia macrophylla (Dutchman's pipe vine).